The following is a 282-amino-acid chain: Large ribosomal subunit protein uL2c (282 aa).

The segment at 230-261 (SAQNAVDHPHGGGEGKAPIGRIPSTPWGKPAL) is disordered.

It belongs to the universal ribosomal protein uL2 family. As to quaternary structure, part of the 50S ribosomal subunit.

It localises to the plastid. The protein is Large ribosomal subunit protein uL2c (rpl2) of Helicosporidium sp. subsp. Simulium jonesii (Green alga).